The sequence spans 178 residues: ATP-dependent protease subunit HslV (178 aa).

Thr-7 is an active-site residue. Positions 162, 165, and 168 each coordinate Na(+).

It belongs to the peptidase T1B family. HslV subfamily. As to quaternary structure, a double ring-shaped homohexamer of HslV is capped on each side by a ring-shaped HslU homohexamer. The assembly of the HslU/HslV complex is dependent on binding of ATP.

It is found in the cytoplasm. The catalysed reaction is ATP-dependent cleavage of peptide bonds with broad specificity.. Allosterically activated by HslU binding. Protease subunit of a proteasome-like degradation complex believed to be a general protein degrading machinery. This is ATP-dependent protease subunit HslV from Paraburkholderia xenovorans (strain LB400).